The following is a 652-amino-acid chain: Threonine--tRNA ligase (652 aa).

The region spanning 1–63 (MAEISLTFPD…TESGDFQLIT (63 aa)) is the TGS domain. The catalytic stretch occupies residues 246–545 (DHRVIGRDLD…LIEMYKGAFP (300 aa)). Residues Cys-340, His-391, and His-522 each contribute to the Zn(2+) site.

It belongs to the class-II aminoacyl-tRNA synthetase family. As to quaternary structure, homodimer. It depends on Zn(2+) as a cofactor.

The protein resides in the cytoplasm. It carries out the reaction tRNA(Thr) + L-threonine + ATP = L-threonyl-tRNA(Thr) + AMP + diphosphate + H(+). Its function is as follows. Catalyzes the attachment of threonine to tRNA(Thr) in a two-step reaction: L-threonine is first activated by ATP to form Thr-AMP and then transferred to the acceptor end of tRNA(Thr). Also edits incorrectly charged L-seryl-tRNA(Thr). The protein is Threonine--tRNA ligase of Leuconostoc mesenteroides subsp. mesenteroides (strain ATCC 8293 / DSM 20343 / BCRC 11652 / CCM 1803 / JCM 6124 / NCDO 523 / NBRC 100496 / NCIMB 8023 / NCTC 12954 / NRRL B-1118 / 37Y).